We begin with the raw amino-acid sequence, 820 residues long: G-type lectin S-receptor-like serine/threonine-protein kinase At1g11280 (820 aa).

A signal peptide spans 1–28 (MGIHLGEIGIVLFPWFLWLSLFLSCGYA). Residues 29-148 (AITISSPLTL…VSENLLWQSF (120 aa)) form the Bulb-type lectin domain. The Extracellular segment spans residues 29 to 434 (AITISSPLTL…SELAGSRRTK (406 aa)). Residues asparagine 57, asparagine 92, asparagine 98, asparagine 241, and asparagine 272 are each glycosylated (N-linked (GlcNAc...) asparagine). The EGF-like domain occupies 283 to 319 (PANLCDLYGACGPFGLCVTSNPTKCKCMKGFVPKYKE). 2 disulfides stabilise this stretch: cysteine 287-cysteine 299 and cysteine 293-cysteine 307. Residues asparagine 325, asparagine 341, and asparagine 384 are each glycosylated (N-linked (GlcNAc...) asparagine). In terms of domain architecture, PAN spans 338 to 422 (CQANLSTKTQ…VGGEFLSIRL (85 aa)). 2 cysteine pairs are disulfide-bonded: cysteine 377/cysteine 398 and cysteine 381/cysteine 387. A helical transmembrane segment spans residues 435 to 455 (IIVGSISLSIFVILAFGSYKY). The Cytoplasmic segment spans residues 456 to 820 (WRYRAKQNVG…HVTQTEIYGR (365 aa)). Residues 505–792 (FNVSNKLGQG…DLPRPKQPLF (288 aa)) enclose the Protein kinase domain. Residues 511 to 519 (LGQGGFGPV) and lysine 533 each bind ATP. Phosphoserine occurs at positions 539 and 554. The interval 594–611 (TLKLQIDWPKRFNIIQGV) is caM-binding. The active-site Proton acceptor is the aspartate 630. Phosphoserine occurs at positions 634 and 647. Threonine 664 is subject to Phosphothreonine. Serine 707, serine 708, and serine 808 each carry phosphoserine. Threonine 815 is subject to Phosphothreonine.

Belongs to the protein kinase superfamily. Ser/Thr protein kinase family.

The protein resides in the cell membrane. The enzyme catalyses L-seryl-[protein] + ATP = O-phospho-L-seryl-[protein] + ADP + H(+). It carries out the reaction L-threonyl-[protein] + ATP = O-phospho-L-threonyl-[protein] + ADP + H(+). In Arabidopsis thaliana (Mouse-ear cress), this protein is G-type lectin S-receptor-like serine/threonine-protein kinase At1g11280.